Consider the following 353-residue polypeptide: Methylthioribose-1-phosphate isomerase (353 aa).

Residues 51–53 (RGA), Arg94, and Gln199 each bind substrate. The Proton donor role is filled by Asp240. Residue 250 to 251 (NK) participates in substrate binding.

Belongs to the EIF-2B alpha/beta/delta subunits family. MtnA subfamily. Homodimer.

The catalysed reaction is 5-(methylsulfanyl)-alpha-D-ribose 1-phosphate = 5-(methylsulfanyl)-D-ribulose 1-phosphate. It participates in amino-acid biosynthesis; L-methionine biosynthesis via salvage pathway; L-methionine from S-methyl-5-thio-alpha-D-ribose 1-phosphate: step 1/6. In terms of biological role, catalyzes the interconversion of methylthioribose-1-phosphate (MTR-1-P) into methylthioribulose-1-phosphate (MTRu-1-P). The protein is Methylthioribose-1-phosphate isomerase of Bacillus cereus (strain ATCC 14579 / DSM 31 / CCUG 7414 / JCM 2152 / NBRC 15305 / NCIMB 9373 / NCTC 2599 / NRRL B-3711).